We begin with the raw amino-acid sequence, 496 residues long: Maintenance of mitochondrial morphology protein 1 (496 aa).

Over 1–22 (MSSQLNDPTPIPAQSSLSFTQG) the chain is Lumenal. A helical transmembrane segment spans residues 23-43 (FLLGQLSVVLLIAAFIKFFIF). The Cytoplasmic segment spans residues 44-496 (GEAPPPPSRG…SLPGGGVTTT (453 aa)). Disordered regions lie at residues 50 to 96 (PSRG…VPSS), 276 to 331 (PLDT…KSNV), 395 to 433 (GRTG…SREP), and 449 to 496 (DLAS…VTTT). Residues 54-64 (LSHRSATHRRS) show a composition bias toward basic residues. Positions 65–74 (NSIYSSTQHD) are enriched in polar residues. Over residues 75-84 (GNTRTLREKP) the composition is skewed to basic and acidic residues. Over residues 85 to 96 (SNSNVLRPVPSS) the composition is skewed to polar residues. Positions 131–388 (QPESLDWFNV…EPRVQVVGLP (258 aa)) constitute an SMP-LTD domain. The span at 276-287 (PLDTPSHSPSPP) shows a compositional bias: pro residues. Residues 407–418 (TGSNAPRSSTAA) show a composition bias toward polar residues. Basic and acidic residues-rich tracts occupy residues 424 to 433 (AHHEDSSREP) and 462 to 474 (GDLR…REES).

It belongs to the MMM1 family. In terms of assembly, homodimer. Component of the ER-mitochondria encounter structure (ERMES) or MDM complex, composed of mmm1, mdm10, mdm12 and mdm34. A mmm1 homodimer associates with one molecule of mdm12 on each side in a pairwise head-to-tail manner, and the SMP-LTD domains of mmm1 and mdm12 generate a continuous hydrophobic tunnel for phospholipid trafficking.

The protein localises to the endoplasmic reticulum membrane. Its function is as follows. Component of the ERMES/MDM complex, which serves as a molecular tether to connect the endoplasmic reticulum (ER) and mitochondria. Components of this complex are involved in the control of mitochondrial shape and protein biogenesis, and function in nonvesicular lipid trafficking between the ER and mitochondria. The mdm12-mmm1 subcomplex functions in the major beta-barrel assembly pathway that is responsible for biogenesis of all outer membrane beta-barrel proteins, and acts in a late step after the SAM complex. The mdm10-mdm12-mmm1 subcomplex further acts in the TOM40-specific pathway after the action of the mdm12-mmm1 complex. Essential for establishing and maintaining the structure of mitochondria and maintenance of mtDNA nucleoids. The polypeptide is Maintenance of mitochondrial morphology protein 1 (Neosartorya fischeri (strain ATCC 1020 / DSM 3700 / CBS 544.65 / FGSC A1164 / JCM 1740 / NRRL 181 / WB 181) (Aspergillus fischerianus)).